A 102-amino-acid polypeptide reads, in one-letter code: Small ribosomal subunit protein uS10 (102 aa).

This sequence belongs to the universal ribosomal protein uS10 family. In terms of assembly, part of the 30S ribosomal subunit.

Involved in the binding of tRNA to the ribosomes. This chain is Small ribosomal subunit protein uS10, found in Clostridium novyi (strain NT).